An 88-amino-acid chain; its full sequence is Meiosis expressed gene 1 protein homolog (88 aa).

It belongs to the MEIG1 family. Interacts with PACRG. Interacts with MORN3.

Its function is as follows. Essential for spermiogenesis. The sequence is that of Meiosis expressed gene 1 protein homolog from Homo sapiens (Human).